Consider the following 183-residue polypeptide: Caspase recruitment domain-containing protein 19 (183 aa).

Cys-7 and Cys-77 are oxidised to a cystine. Residues 8-99 (DRLVQDTPFL…PLHSHLPSRY (92 aa)) form the CARD domain. A helical membrane pass occupies residues 122–142 (GPMSFLAGLGLAAGLALLLYC).

Associates with BCL10 by CARD-CARD interaction.

The protein localises to the endoplasmic reticulum membrane. It is found in the mitochondrion membrane. Its function is as follows. Plays a role in inhibiting the effects of BCL10-induced activation of NF-kappa-B. This Mus musculus (Mouse) protein is Caspase recruitment domain-containing protein 19.